Consider the following 342-residue polypeptide: Holliday junction branch migration complex subunit RuvB (342 aa).

Positions 1 to 182 (MRIEALNTAP…FGINSRLDYY (182 aa)) are large ATPase domain (RuvB-L). Residues Ile21, Arg22, Gly63, Lys66, Thr67, Thr68, 129–131 (EDY), Arg172, Tyr182, and Arg219 contribute to the ATP site. Thr67 serves as a coordination point for Mg(2+). The interval 183–253 (SPELLQSIIV…VARRTLESLE (71 aa)) is small ATPAse domain (RuvB-S). The tract at residues 256 to 342 (EGGLDDMDKK…DHGPLFDHNS (87 aa)) is head domain (RuvB-H). DNA is bound by residues Arg311 and Arg316.

The protein belongs to the RuvB family. As to quaternary structure, homohexamer. Forms an RuvA(8)-RuvB(12)-Holliday junction (HJ) complex. HJ DNA is sandwiched between 2 RuvA tetramers; dsDNA enters through RuvA and exits via RuvB. An RuvB hexamer assembles on each DNA strand where it exits the tetramer. Each RuvB hexamer is contacted by two RuvA subunits (via domain III) on 2 adjacent RuvB subunits; this complex drives branch migration. In the full resolvosome a probable DNA-RuvA(4)-RuvB(12)-RuvC(2) complex forms which resolves the HJ.

It is found in the cytoplasm. The catalysed reaction is ATP + H2O = ADP + phosphate + H(+). Its function is as follows. The RuvA-RuvB-RuvC complex processes Holliday junction (HJ) DNA during genetic recombination and DNA repair, while the RuvA-RuvB complex plays an important role in the rescue of blocked DNA replication forks via replication fork reversal (RFR). RuvA specifically binds to HJ cruciform DNA, conferring on it an open structure. The RuvB hexamer acts as an ATP-dependent pump, pulling dsDNA into and through the RuvAB complex. RuvB forms 2 homohexamers on either side of HJ DNA bound by 1 or 2 RuvA tetramers; 4 subunits per hexamer contact DNA at a time. Coordinated motions by a converter formed by DNA-disengaged RuvB subunits stimulates ATP hydrolysis and nucleotide exchange. Immobilization of the converter enables RuvB to convert the ATP-contained energy into a lever motion, pulling 2 nucleotides of DNA out of the RuvA tetramer per ATP hydrolyzed, thus driving DNA branch migration. The RuvB motors rotate together with the DNA substrate, which together with the progressing nucleotide cycle form the mechanistic basis for DNA recombination by continuous HJ branch migration. Branch migration allows RuvC to scan DNA until it finds its consensus sequence, where it cleaves and resolves cruciform DNA. The polypeptide is Holliday junction branch migration complex subunit RuvB (Chlorobaculum parvum (strain DSM 263 / NCIMB 8327) (Chlorobium vibrioforme subsp. thiosulfatophilum)).